The following is a 459-amino-acid chain: Argininosuccinate lyase (459 aa).

The protein belongs to the lyase 1 family. Argininosuccinate lyase subfamily.

It localises to the cytoplasm. It carries out the reaction 2-(N(omega)-L-arginino)succinate = fumarate + L-arginine. Its pathway is amino-acid biosynthesis; L-arginine biosynthesis; L-arginine from L-ornithine and carbamoyl phosphate: step 3/3. The chain is Argininosuccinate lyase from Prochlorococcus marinus subsp. pastoris (strain CCMP1986 / NIES-2087 / MED4).